We begin with the raw amino-acid sequence, 568 residues long: Proline--tRNA ligase (568 aa).

Belongs to the class-II aminoacyl-tRNA synthetase family. ProS type 1 subfamily. Homodimer.

It localises to the cytoplasm. The catalysed reaction is tRNA(Pro) + L-proline + ATP = L-prolyl-tRNA(Pro) + AMP + diphosphate. In terms of biological role, catalyzes the attachment of proline to tRNA(Pro) in a two-step reaction: proline is first activated by ATP to form Pro-AMP and then transferred to the acceptor end of tRNA(Pro). As ProRS can inadvertently accommodate and process non-cognate amino acids such as alanine and cysteine, to avoid such errors it has two additional distinct editing activities against alanine. One activity is designated as 'pretransfer' editing and involves the tRNA(Pro)-independent hydrolysis of activated Ala-AMP. The other activity is designated 'posttransfer' editing and involves deacylation of mischarged Ala-tRNA(Pro). The misacylated Cys-tRNA(Pro) is not edited by ProRS. In Aliarcobacter butzleri (strain RM4018) (Arcobacter butzleri), this protein is Proline--tRNA ligase.